A 394-amino-acid polypeptide reads, in one-letter code: Putative FNIP repeat-containing protein R636 (394 aa).

FNIP repeat units follow at residues 126–167 (FNKS…FSVY), 168–207 (FDQPVVGYLPTRLTHLIFGTDFNQPIKGALPDTLEYLYFG), and 210–250 (FNQP…IFEA).

The sequence is that of Putative FNIP repeat-containing protein R636 from Acanthamoeba polyphaga mimivirus (APMV).